A 601-amino-acid polypeptide reads, in one-letter code: MEGADLLTAGVLFLFAAVAAVPLAARLGIGAVLGYLLAGIAIGPWGLGFISDVDEILHFSELGVVFLMFIIGLELNPSRLWQLRRSIFGVGAAQVLLSAAVLAGLLMLADFLWQAAVVGGIGLAMSSTAMALQLMREKGMNRSESGQLGFSVLLFQDLAVIPALALVPLLAGSADEHFDWFKVAMKVLAFAVMLIGGRYLLRPVFRFIAASGVREVFTAATLLLVLSAALFMDALGLSMALGTFIAGVLLAESEYRHELENAIDPFKGLLLGLFFISVGMSLNLGVLYTHLLWVAASVVILVAIKMLTLYLLARLYGIRSSERMQFASVLSQGGEFAFVLFSTASSQRLFQGDQMALLLVTVTLSMMTTPLLMKGIDKWLSRRLNGPEENDEKPWVEDDKPQVIVVGFGRFGQVIARLLMANKMRITVLERDIGAVNLMRKYGYKVYYGDATQVELLRSAGAEAAESIVITCNEPEDTMKLVALCQQHFPHLHILARARGRVEAHELLQAGVTQFSRETFSSALELGRKTLVSLGMHPHQAQRAQLHFRRLDMRMLRELIPEHSDMVQISRAREARRELEEIFQREMQQERRQLDGWDEFE.

Transmembrane regions (helical) follow at residues 4–24, 29–49, 55–75, 87–107, 111–131, 152–172, 177–197, 207–227, 230–250, 262–282, 284–304, 324–344, and 356–376; these read ADLL…VPLA, IGAV…GLGF, EILH…GLEL, IFGV…GLLM, FLWQ…TAMA, VLLF…LLAG, HFDW…LIGG, FIAA…LVLS, LFMD…GVLL, AIDP…GMSL, LGVL…LVAI, MQFA…FSTA, and ALLL…MKGI. Residues 400-519 enclose the RCK N-terminal domain; the sequence is KPQVIVVGFG…AGVTQFSRET (120 aa).

This sequence belongs to the monovalent cation:proton antiporter 2 (CPA2) transporter (TC 2.A.37) family. KefB subfamily. Interacts with the regulatory subunit KefG.

It is found in the cell inner membrane. Its function is as follows. Pore-forming subunit of a potassium efflux system that confers protection against electrophiles. Catalyzes K(+)/H(+) antiport. The sequence is that of Glutathione-regulated potassium-efflux system protein KefB from Salmonella schwarzengrund (strain CVM19633).